The primary structure comprises 466 residues: Muscarinic acetylcholine receptor M2 (466 aa).

The Extracellular segment spans residues 1-25 (MNNSTYINSSSENVIALESPYKTIE). 3 N-linked (GlcNAc...) asparagine glycosylation sites follow: asparagine 2, asparagine 3, and asparagine 8. A helical membrane pass occupies residues 26-48 (VVFIVLVAGSLSLVTIIGNILVM). Residues 49–62 (VSIKVNRHLQTVNN) lie on the Cytoplasmic side of the membrane. A helical membrane pass occupies residues 63–83 (YFLFSLACADLIIGIFSMNLY). Residues 84–100 (TLYTVIGYWPLGPVVCD) are Extracellular-facing. Residues cysteine 99 and cysteine 179 are joined by a disulfide bond. A helical transmembrane segment spans residues 101–122 (LWLALDYVVSNASVMNLLIISF). Positions 123 to 125 (DRY) match the Important for signaling motif. Residues 123 to 142 (DRYFCVTKPLTYPVKRTTKM) are Cytoplasmic-facing. Residues 143–165 (AGMMIAAAWVLSFILWAPAILFW) traverse the membrane as a helical segment. At 166–187 (QFIVGGRTVPDKDCYIQFFSNP) the chain is on the extracellular side. The helical transmembrane segment at 188 to 212 (AVTFGTAIAAFYLPVIIMTVLYWQI) threads the bilayer. Residues 213-387 (SRASKSRIKK…PPSREKKVTR (175 aa)) lie on the Cytoplasmic side of the membrane. 2 disordered regions span residues 223-265 (GKKE…KVQN) and 279-315 (QGEEKDSSNDSTSVSVVPSNTKEDEAAKDASQISASQ). 2 stretches are compositionally biased toward polar residues: residues 228-238 (AQNQDPVSPSL) and 246-256 (PNNNNIPTSSD). Residues 287-298 (NDSTSVSVVPSN) show a composition bias toward low complexity. The helical transmembrane segment at 388–410 (TILAILLAFIITWTPYNVMVLIN) threads the bilayer. Residues 411–418 (SFCASCIP) lie on the Extracellular side of the membrane. Residues cysteine 413 and cysteine 416 are joined by a disulfide bond. Residues 419–442 (GTVWTIGYWLCYINSTINPACYAL) form a helical membrane-spanning segment. Residues 436–440 (NPACY) carry the Important for signaling motif. The Cytoplasmic segment spans residues 443–466 (CNATFKKTFKHLLMCHYKNIGATR). Threonine 446, threonine 450, and threonine 465 each carry phosphothreonine.

Belongs to the G-protein coupled receptor 1 family. Muscarinic acetylcholine receptor subfamily. CHRM2 sub-subfamily.

The protein resides in the cell membrane. It is found in the postsynaptic cell membrane. In terms of biological role, the muscarinic acetylcholine receptor mediates various cellular responses, including inhibition of adenylate cyclase, breakdown of phosphoinositides and modulation of potassium channels through the action of G proteins. Primary transducing effect is adenylate cyclase inhibition. Signaling promotes phospholipase C activity, leading to the release of inositol trisphosphate (IP3); this then triggers calcium ion release into the cytosol. In Gallus gallus (Chicken), this protein is Muscarinic acetylcholine receptor M2 (CHRM2).